The primary structure comprises 78 residues: UPF0349 protein Sca_0544 (78 aa).

Belongs to the UPF0349 family.

This Staphylococcus carnosus (strain TM300) protein is UPF0349 protein Sca_0544.